Here is a 428-residue protein sequence, read N- to C-terminus: Enolase (428 aa).

Position 162 (Gln162) interacts with (2R)-2-phosphoglycerate. Glu204 (proton donor) is an active-site residue. Residues Asp241, Glu283, and Asp310 each coordinate Mg(2+). (2R)-2-phosphoglycerate is bound by residues Lys335, Arg364, Ser365, and Lys386. Lys335 acts as the Proton acceptor in catalysis.

This sequence belongs to the enolase family. Mg(2+) serves as cofactor.

Its subcellular location is the cytoplasm. It localises to the secreted. It is found in the cell surface. The enzyme catalyses (2R)-2-phosphoglycerate = phosphoenolpyruvate + H2O. Its pathway is carbohydrate degradation; glycolysis; pyruvate from D-glyceraldehyde 3-phosphate: step 4/5. Functionally, catalyzes the reversible conversion of 2-phosphoglycerate (2-PG) into phosphoenolpyruvate (PEP). It is essential for the degradation of carbohydrates via glycolysis. The sequence is that of Enolase from Rhodococcus opacus (strain B4).